The chain runs to 315 residues: Long form salivary protein D7L2 (315 aa).

The signal sequence occupies residues 1 to 18 (MIVAPVVLSIFLQLFVQA). Disulfide bonds link Cys37/Cys73, Cys69/Cys128, Cys178/Cys211, and Cys252/Cys263.

It belongs to the PBP/GOBP family. As to quaternary structure, interacts with host coagulation factor XII/F12 (inactive and activated). Interacts with host coagulation factor XI/F11 (inactive).

The protein resides in the secreted. Functionally, modulates blood feeding of female mosquitoes on vertebrate species by binding and sequestering different mediators involved in the host response. Binds leukotriene B4 and leukotriene D4. Exhibits anticoagulant activity targeting the intrinsic coagulation pathway; binds coagulation factors XII and XI, preventing generation of activated FXIIa and FXIa. The chain is Long form salivary protein D7L2 from Anopheles gambiae (African malaria mosquito).